We begin with the raw amino-acid sequence, 222 residues long: Glutathione S-transferase A3 (222 aa).

Ala-2 bears the N-acetylalanine mark. In terms of domain architecture, GST N-terminal spans 3–83 (GKPKLHYFNG…YIASKYNLYG (81 aa)). Lys-4 carries the post-translational modification N6-succinyllysine. Glutathione is bound by residues Tyr-9, Arg-45, 54–55 (QV), and 67–68 (QT). Residues 85 to 207 (DIKERALIDM…LQPGSPRKPP (123 aa)) enclose the GST C-terminal domain.

The protein belongs to the GST superfamily. Alpha family. In terms of assembly, homodimer.

The protein localises to the cytoplasm. The catalysed reaction is RX + glutathione = an S-substituted glutathione + a halide anion + H(+). It catalyses the reaction androst-5-ene-3,17-dione = androst-4-ene-3,17-dione. The enzyme catalyses pregn-5-ene-3,20-dione = progesterone. In terms of biological role, conjugation of reduced glutathione to a wide number of exogenous and endogenous hydrophobic electrophiles. Catalyzes isomerization reactions that contribute to the biosynthesis of steroid hormones. Efficiently catalyze obligatory double-bond isomerizations of delta(5)-androstene-3,17-dione and delta(5)-pregnene-3,20-dione, precursors to testosterone and progesterone, respectively. Has substantial activity toward aflatoxin B1-8,9-epoxide. This chain is Glutathione S-transferase A3, found in Homo sapiens (Human).